We begin with the raw amino-acid sequence, 354 residues long: Thiamine thiazole synthase (354 aa).

Residues A83, 104–105 (EA), G112, and V177 contribute to the substrate site. Position 210 is a 2,3-didehydroalanine (Cys) (C210). Substrate contacts are provided by residues D212, H227, M305, and 315–317 (RMR).

Belongs to the THI4 family. As to quaternary structure, homooctamer. The cofactor is Fe cation. During the catalytic reaction, a sulfide is transferred from Cys-210 to a reaction intermediate, generating a dehydroalanine residue.

It is found in the cytoplasm. The protein resides in the nucleus. It catalyses the reaction [ADP-thiazole synthase]-L-cysteine + glycine + NAD(+) = [ADP-thiazole synthase]-dehydroalanine + ADP-5-ethyl-4-methylthiazole-2-carboxylate + nicotinamide + 3 H2O + 2 H(+). Involved in biosynthesis of the thiamine precursor thiazole. Catalyzes the conversion of NAD and glycine to adenosine diphosphate 5-(2-hydroxyethyl)-4-methylthiazole-2-carboxylic acid (ADT), an adenylated thiazole intermediate. The reaction includes an iron-dependent sulfide transfer from a conserved cysteine residue of the protein to a thiazole intermediate. The enzyme can only undergo a single turnover, which suggests it is a suicide enzyme. May have additional roles in adaptation to various stress conditions and in DNA damage tolerance. The sequence is that of Thiamine thiazole synthase from Candida albicans (strain WO-1) (Yeast).